Reading from the N-terminus, the 391-residue chain is Probable protein phosphatase 2C 32 (391 aa).

The segment at Met1 to Arg53 is disordered. Low complexity predominate over residues Pro8–Pro51. A helical transmembrane segment spans residues Leu95–Val115. The PPM-type phosphatase domain occupies Glu129–Leu386. Residues Asp168, Gly169, Asp332, and Asp377 each contribute to the Mn(2+) site.

It belongs to the PP2C family. It depends on Mg(2+) as a cofactor. The cofactor is Mn(2+).

The protein resides in the membrane. It catalyses the reaction O-phospho-L-seryl-[protein] + H2O = L-seryl-[protein] + phosphate. It carries out the reaction O-phospho-L-threonyl-[protein] + H2O = L-threonyl-[protein] + phosphate. This is Probable protein phosphatase 2C 32 from Oryza sativa subsp. japonica (Rice).